Reading from the N-terminus, the 156-residue chain is Endoribonuclease YbeY (156 aa).

Positions 117, 121, and 127 each coordinate Zn(2+).

The protein belongs to the endoribonuclease YbeY family. Zn(2+) is required as a cofactor.

Its subcellular location is the cytoplasm. Single strand-specific metallo-endoribonuclease involved in late-stage 70S ribosome quality control and in maturation of the 3' terminus of the 16S rRNA. In Herminiimonas arsenicoxydans, this protein is Endoribonuclease YbeY.